The primary structure comprises 477 residues: Methylenetetrahydrofolate--tRNA-(uracil-5-)-methyltransferase TrmFO (477 aa).

An FAD-binding site is contributed by 15 to 20; the sequence is GAGLAG.

It belongs to the MnmG family. TrmFO subfamily. Requires FAD as cofactor.

It is found in the cytoplasm. The catalysed reaction is uridine(54) in tRNA + (6R)-5,10-methylene-5,6,7,8-tetrahydrofolate + NADH + H(+) = 5-methyluridine(54) in tRNA + (6S)-5,6,7,8-tetrahydrofolate + NAD(+). It catalyses the reaction uridine(54) in tRNA + (6R)-5,10-methylene-5,6,7,8-tetrahydrofolate + NADPH + H(+) = 5-methyluridine(54) in tRNA + (6S)-5,6,7,8-tetrahydrofolate + NADP(+). Functionally, catalyzes the folate-dependent formation of 5-methyl-uridine at position 54 (M-5-U54) in all tRNAs. The chain is Methylenetetrahydrofolate--tRNA-(uracil-5-)-methyltransferase TrmFO from Nitrobacter hamburgensis (strain DSM 10229 / NCIMB 13809 / X14).